The chain runs to 504 residues: L-carnitine/gamma-butyrobetaine antiporter (504 aa).

The next 12 membrane-spanning stretches (helical) occupy residues 10–30 (IEPKVFFPPLIIVGILCWLTV), 51–71 (WGWAFEWYMVVMLFGWFWLVF), 92–112 (IFMMFASCTSAAVLFWGSIEI), 143–163 (GPLPWATYSFLSVAFAYFFFV), 195–215 (FYLVALIFAMGTSLGLATPLV), 231–251 (LDAIIITCWIILNAICVACGL), 263–283 (SYLSFLMLGWVFIVSGASFIM), 316–336 (WTVFYWAWWVIYAIQMSIFLA), 347–367 (LCFGMVMGLTASTWILWTVLG), 403–423 (LSTATMWGFFILCFIATVTLI), 446–466 (LLVRIGWSILVGIIGIVLLAL), and 475–495 (AIIAGGCPLFFVNIMVTLSFI).

Belongs to the BCCT transporter (TC 2.A.15) family. CaiT subfamily. In terms of assembly, homotrimer.

It is found in the cell inner membrane. It carries out the reaction 4-(trimethylamino)butanoate(in) + (R)-carnitine(out) = 4-(trimethylamino)butanoate(out) + (R)-carnitine(in). It participates in amine and polyamine metabolism; carnitine metabolism. Its function is as follows. Catalyzes the exchange of L-carnitine for gamma-butyrobetaine. The protein is L-carnitine/gamma-butyrobetaine antiporter of Escherichia fergusonii (strain ATCC 35469 / DSM 13698 / CCUG 18766 / IAM 14443 / JCM 21226 / LMG 7866 / NBRC 102419 / NCTC 12128 / CDC 0568-73).